A 61-amino-acid chain; its full sequence is Metallothionein-1 (61 aa).

M1 bears the N-acetylmethionine mark. A beta region spans residues 1 to 29; sequence MDPNCSCSTGSTCTCSSSCGCKDCKCTSC. The a divalent metal cation site is built by C5, C7, C13, C15, C19, C21, C24, C26, C29, C33, C34, C36, C37, C41, C44, C48, C50, C57, C59, and C60. The tract at residues 30–61 is alpha; sequence KKSCCSCCPVGCSKCAQGCVCKGASDKCTCCA.

It belongs to the metallothionein superfamily. Type 1 family.

Metallothioneins have a high content of cysteine residues that bind various heavy metals; these proteins are transcriptionally regulated by both heavy metals and glucocorticoids. In Cricetulus griseus (Chinese hamster), this protein is Metallothionein-1 (MT1).